The primary structure comprises 92 residues: Large ribosomal subunit protein eL42 (92 aa).

Residues C11, C14, C70, and C73 each contribute to the Zn(2+) site. Residues 11–73 (CPNCRKHTVH…LDLRLKCKEC (63 aa)) form a C4-type zinc finger.

It belongs to the eukaryotic ribosomal protein eL42 family. Part of the 50S ribosomal subunit. It depends on Zn(2+) as a cofactor.

In terms of biological role, binds to the 23S rRNA. The chain is Large ribosomal subunit protein eL42 from Methanothermobacter thermautotrophicus (strain ATCC 29096 / DSM 1053 / JCM 10044 / NBRC 100330 / Delta H) (Methanobacterium thermoautotrophicum).